The chain runs to 287 residues: Hydroxyethylthiazole kinase (287 aa).

Methionine 50 provides a ligand contact to substrate. Positions 126 and 185 each coordinate ATP. Substrate is bound at residue glycine 212.

This sequence belongs to the Thz kinase family. Mg(2+) is required as a cofactor.

The catalysed reaction is 5-(2-hydroxyethyl)-4-methylthiazole + ATP = 4-methyl-5-(2-phosphooxyethyl)-thiazole + ADP + H(+). Its pathway is cofactor biosynthesis; thiamine diphosphate biosynthesis; 4-methyl-5-(2-phosphoethyl)-thiazole from 5-(2-hydroxyethyl)-4-methylthiazole: step 1/1. In terms of biological role, catalyzes the phosphorylation of the hydroxyl group of 4-methyl-5-beta-hydroxyethylthiazole (THZ). This Methanobrevibacter smithii (strain ATCC 35061 / DSM 861 / OCM 144 / PS) protein is Hydroxyethylthiazole kinase.